Reading from the N-terminus, the 286-residue chain is Alpha-ketoglutarate-dependent dioxygenase alkB homolog 3 (286 aa).

Positions 1-38 (MEDKRRRARVQGAWAGPAKSQATAQPAPTAENNLQQRP) are disordered. Over residues 20-36 (SQATAQPAPTAENNLQQ) the composition is skewed to polar residues. Substrate-binding positions include Trp-115 and 141–143 (YTY). Residues 172–278 (SFNSLLCNLY…RINLTFRTVY (107 aa)) form the Fe2OG dioxygenase domain. Leu-177 is modified ((4R)-5-hydroxyleucine; alternate). A (4R)-5-oxoleucine; alternate modification is found at Leu-177. Residue 179–181 (NLY) coordinates 2-oxoglutarate. Residues His-191 and Asp-193 each coordinate Fe cation. Asp-194 lines the substrate pocket. His-257 contributes to the Fe cation binding site. 2-oxoglutarate-binding positions include 269 to 275 (RINLTFR) and Arg-275.

The protein belongs to the alkB family. As to quaternary structure, interacts with the ASCC complex composed of ASCC1, ASCC2 and ASCC3. Interacts directly with ASCC3, and is thereby recruited to the ASCC complex. Interacts with OTUD4; the interaction is direct. Interacts with USP7 and USP9X. Fe(2+) serves as cofactor. In terms of processing, ubiquitinated; undergoes 'Lys-48'-linked polyubiquitination. OTUD4 promotes USP7 and USP9X-dependent deubiquitination of 'Lys-48'-polyubiquitinated ALKBH3 promoting the repair of alkylated DNA lesions.

It is found in the nucleus. The protein resides in the cytoplasm. It carries out the reaction an N(1)-methyladenosine in mRNA + 2-oxoglutarate + O2 = an adenosine in mRNA + formaldehyde + succinate + CO2. The enzyme catalyses a methylated nucleobase within DNA + 2-oxoglutarate + O2 = a nucleobase within DNA + formaldehyde + succinate + CO2. The catalysed reaction is an N(1)-methyl-2'-deoxyadenosine in single-stranded DNA + 2-oxoglutarate + O2 = a 2'-deoxyadenosine in single-stranded DNA + formaldehyde + succinate + CO2 + H(+). It catalyses the reaction an N(3)-methyl-2'-deoxycytidine in single-stranded DNA + 2-oxoglutarate + O2 = a 2'-deoxycytidine in single-stranded DNA + formaldehyde + succinate + CO2 + H(+). It carries out the reaction a 3,N(4)-etheno-2'-deoxycytidine in single-stranded DNA + 2-oxoglutarate + O2 + H2O = a 2'-deoxycytidine in single-stranded DNA + glyoxal + succinate + CO2. With respect to regulation, activated by ascorbate. In terms of biological role, dioxygenase that mediates demethylation of DNA and RNA containing 1-methyladenosine (m1A). Repairs alkylated DNA containing 1-methyladenosine (m1A) and 3-methylcytosine (m3C) by oxidative demethylation. Has a strong preference for single-stranded DNA. Able to process alkylated m3C within double-stranded regions via its interaction with ASCC3, which promotes DNA unwinding to generate single-stranded substrate needed for ALKBH3. Can repair exocyclic 3,N4-ethenocytosine adducs in single-stranded DNA. Also acts on RNA. Demethylates N(1)-methyladenosine (m1A) RNA, an epigenetic internal modification of messenger RNAs (mRNAs) highly enriched within 5'-untranslated regions (UTRs) and in the vicinity of start codons. Requires molecular oxygen, alpha-ketoglutarate and iron. This chain is Alpha-ketoglutarate-dependent dioxygenase alkB homolog 3, found in Bos taurus (Bovine).